Here is a 325-residue protein sequence, read N- to C-terminus: Olfactory receptor 10AC1 (325 aa).

At 1-26 the chain is on the extracellular side; sequence MDSPSNATVPCGFLLQGFSEFPHLRP. The N-linked (GlcNAc...) asparagine glycan is linked to Asn-6. The helical transmembrane segment at 27–47 threads the bilayer; the sequence is VLFLLLLGVHLATLGGNLLIL. The Cytoplasmic portion of the chain corresponds to 48-57; that stretch reads VAVASMPSRQ. Residues 58–78 traverse the membrane as a helical segment; that stretch reads PMLLFLCQLSAIELCYTLVVV. At 79–101 the chain is on the extracellular side; it reads PRSLVDLSTPGHRRGSPISFLSC. Residues 102 to 122 form a helical membrane-spanning segment; sequence AFQMQMFVALGGAECFLLAAM. At 123 to 147 the chain is on the cytoplasmic side; it reads AYDRYVAICHPLRYAAVVTPGLCAR. The helical transmembrane segment at 148 to 168 threads the bilayer; the sequence is LALACCLRGLAVSVGLTVAIF. The Extracellular segment spans residues 169 to 171; it reads HLP. A helical membrane pass occupies residues 172–192; that stretch reads FCGSRLLLHFFCDITALLHLA. The Cytoplasmic segment spans residues 193 to 200; that stretch reads CTRSYADE. A helical transmembrane segment spans residues 201–221; the sequence is LPLLGACLVLLLLPSVLILAS. The Extracellular portion of the chain corresponds to 222 to 243; the sequence is YGAIAAALRRLRCPKGRGKAAS. Residues 244-264 traverse the membrane as a helical segment; that stretch reads TCALHLAVTFLHYGCATFMYV. The Cytoplasmic segment spans residues 265–325; that stretch reads RPRASYSPRL…QAPGGDLREL (61 aa).

This sequence belongs to the G-protein coupled receptor 1 family.

The protein resides in the cell membrane. In terms of biological role, odorant receptor. This chain is Olfactory receptor 10AC1 (OR10AC1), found in Homo sapiens (Human).